A 249-amino-acid chain; its full sequence is Serine 3-dehydrogenase (249 aa).

6 to 30 serves as a coordination point for NADP(+); sequence LITGATSGFGQATARRFVKEGWKVI. Position 135 (S135) interacts with substrate. Y148 serves as the catalytic Proton acceptor.

This sequence belongs to the short-chain dehydrogenases/reductases (SDR) family. As to quaternary structure, homotetramer.

It catalyses the reaction L-serine + NADP(+) = aminoacetaldehyde + CO2 + NADPH. Its function is as follows. Catalyzes the oxidation of the hydroxyl group of serine to form 2-aminomalonate semialdehyde which is spontaneously converted into 2-aminoacetaldehyde and CO(2). Also acts on D-serine, L-glycerate, D-glycerate and 2-methyl-DL-serine. Does not act on O-methyl-DL-serine and L-threonine. The polypeptide is Serine 3-dehydrogenase (sdh) (Agrobacterium fabrum (strain C58 / ATCC 33970) (Agrobacterium tumefaciens (strain C58))).